The following is a 964-amino-acid chain: Siderophore exporter MmpL5 (964 aa).

Transmembrane regions (helical) follow at residues 31 to 51, 203 to 223, 230 to 250, 255 to 275, 302 to 322, 340 to 360, 389 to 409, 773 to 793, 803 to 823, 826 to 846, 880 to 900, and 923 to 943; these read FAVPIILGWLVTIAVLNVTVP, SLQVIEAVTFTVIIVMLLLVY, AIMLTMVVLGLLATRGGVAFL, IIGLSTFATNLLVVLAIAAAT, MFGGTAHVVLGSGLTIAGATF, AIGMVIVVAAALTLGPAIIAV, WPGPILVGAVALALVGLLTLP, TYDLMIAGISALCLIFIIMLI, VIVGTVVLSLGASFGLSVLIW, ILGIELHWLVLAMAVIILLAV, VVTAAGLVFAFTMMSFAVSEL, and SFMTPSIAALLGKWFWWPQVV.

The protein belongs to the resistance-nodulation-cell division (RND) (TC 2.A.6) family. MmpL subfamily. In terms of assembly, interacts with MmpS5.

Its subcellular location is the cell inner membrane. Its function is as follows. Part of an export system, which is required for biosynthesis and secretion of siderophores. This is Siderophore exporter MmpL5 (mmpL5) from Mycobacterium tuberculosis (strain CDC 1551 / Oshkosh).